A 339-amino-acid polypeptide reads, in one-letter code: MVREEVAGSTQTLQWKCVESRVDSKRLYYGRFILSPLRKGQADTVGIALRRALLGEIEGTCITRAKFGSVPHEYSTIAGIEESVQEILLNLKEIVLRSNLYGVRDASICVKGPRYITAQDIILPPSVEIVDTAQPIANLTEPIDFCIDLQIKRDRGYQTELRKNYQDGSYPIDAESMPVRNVNYSIFSCGNGNEKHEILFLEIWTNGSLTPKEALYEASRNLIDLFLPFLHAEEEGTSFEENKNRFTPPLFTFQKRLTNLKKNKKGIPLNCIFIDQLELTSRTYNCLKRANIHTLLDLLSKTEEDLLRIDSFRMEDRKHIWDTLEKHLPIDLLKNKLSF.

An alpha N-terminal domain (alpha-NTD) region spans residues 1-233 (MVREEVAGST…DLFLPFLHAE (233 aa)). Positions 264-339 (KKGIPLNCIF…IDLLKNKLSF (76 aa)) are alpha C-terminal domain (alpha-CTD).

This sequence belongs to the RNA polymerase alpha chain family. In plastids the minimal PEP RNA polymerase catalytic core is composed of four subunits: alpha, beta, beta', and beta''. When a (nuclear-encoded) sigma factor is associated with the core the holoenzyme is formed, which can initiate transcription.

It is found in the plastid. The protein resides in the chloroplast. It carries out the reaction RNA(n) + a ribonucleoside 5'-triphosphate = RNA(n+1) + diphosphate. In terms of biological role, DNA-dependent RNA polymerase catalyzes the transcription of DNA into RNA using the four ribonucleoside triphosphates as substrates. The protein is DNA-directed RNA polymerase subunit alpha of Elymus hystrix (Eastern bottlebrush grass).